Consider the following 335-residue polypeptide: uncharacterized protein (335 aa).

This is an uncharacterized protein from Escherichia coli (strain K12).